Reading from the N-terminus, the 180-residue chain is UPF0102 protein Tery_0733 (180 aa).

This sequence belongs to the UPF0102 family.

The polypeptide is UPF0102 protein Tery_0733 (Trichodesmium erythraeum (strain IMS101)).